A 180-amino-acid chain; its full sequence is Large ribosomal subunit protein uL5 (180 aa).

The protein belongs to the universal ribosomal protein uL5 family. In terms of assembly, part of the 50S ribosomal subunit; part of the 5S rRNA/L5/L18/L25 subcomplex. Contacts the 5S rRNA and the P site tRNA. Forms a bridge to the 30S subunit in the 70S ribosome.

In terms of biological role, this is one of the proteins that bind and probably mediate the attachment of the 5S RNA into the large ribosomal subunit, where it forms part of the central protuberance. In the 70S ribosome it contacts protein S13 of the 30S subunit (bridge B1b), connecting the 2 subunits; this bridge is implicated in subunit movement. Contacts the P site tRNA; the 5S rRNA and some of its associated proteins might help stabilize positioning of ribosome-bound tRNAs. In Brevibacillus brevis (strain 47 / JCM 6285 / NBRC 100599), this protein is Large ribosomal subunit protein uL5.